The chain runs to 339 residues: Serpentine receptor class delta-19 (339 aa).

Helical transmembrane passes span 2-22, 39-59, 90-110, 130-150, 187-207, 242-262, and 270-290; these read IIFF…LNLL, ATLI…DLFI, VGLS…LISF, ITIM…TLFV, VYAV…IFVL, IIPM…SGLL, and SIFS…LYFV.

The protein belongs to the nematode receptor-like protein srd family.

The protein localises to the membrane. This Caenorhabditis elegans protein is Serpentine receptor class delta-19 (srd-19).